Reading from the N-terminus, the 351-residue chain is Nicotinate-nucleotide--dimethylbenzimidazole phosphoribosyltransferase (351 aa).

Residue glutamate 317 is the Proton acceptor of the active site.

The protein belongs to the CobT family.

The catalysed reaction is 5,6-dimethylbenzimidazole + nicotinate beta-D-ribonucleotide = alpha-ribazole 5'-phosphate + nicotinate + H(+). It functions in the pathway nucleoside biosynthesis; alpha-ribazole biosynthesis; alpha-ribazole from 5,6-dimethylbenzimidazole: step 1/2. Catalyzes the synthesis of alpha-ribazole-5'-phosphate from nicotinate mononucleotide (NAMN) and 5,6-dimethylbenzimidazole (DMB). This is Nicotinate-nucleotide--dimethylbenzimidazole phosphoribosyltransferase from Pseudomonas aeruginosa (strain UCBPP-PA14).